Reading from the N-terminus, the 315-residue chain is Prephenate dehydratase (315 aa).

The region spanning 3-189 (RIAYLGPEGT…ARTRFVLVGP (187 aa)) is the Prephenate dehydratase domain. An ACT domain is found at 203–280 (SVVLRIDNAP…ADVRYLGSWP (78 aa)).

As to quaternary structure, homodimer.

The enzyme catalyses prephenate + H(+) = 3-phenylpyruvate + CO2 + H2O. It functions in the pathway amino-acid biosynthesis; L-phenylalanine biosynthesis; phenylpyruvate from prephenate: step 1/1. This chain is Prephenate dehydratase (pheA), found in Mycobacterium avium (strain 104).